Reading from the N-terminus, the 373-residue chain is 3-dehydroquinate synthase (373 aa).

Residues 107–111 (GVIGD), 131–132 (TS), K144, and K153 contribute to the NAD(+) site. Residues E186, H249, and H267 each contribute to the Zn(2+) site.

This sequence belongs to the sugar phosphate cyclases superfamily. Dehydroquinate synthase family. It depends on Co(2+) as a cofactor. The cofactor is Zn(2+). NAD(+) serves as cofactor.

It localises to the cytoplasm. The catalysed reaction is 7-phospho-2-dehydro-3-deoxy-D-arabino-heptonate = 3-dehydroquinate + phosphate. It participates in metabolic intermediate biosynthesis; chorismate biosynthesis; chorismate from D-erythrose 4-phosphate and phosphoenolpyruvate: step 2/7. Catalyzes the conversion of 3-deoxy-D-arabino-heptulosonate 7-phosphate (DAHP) to dehydroquinate (DHQ). This is 3-dehydroquinate synthase from Ruegeria sp. (strain TM1040) (Silicibacter sp.).